The primary structure comprises 251 residues: Capsid protein (251 aa).

Residues 1–29 are disordered; it reads MPKRDAPWRSMAGTSKVSRNANYSPRSGI. The Bipartite nuclear localization signal signature appears at 3 to 20; the sequence is KRDAPWRSMAGTSKVSRN. Residues 12–25 are compositionally biased toward polar residues; sequence AGTSKVSRNANYSP. The short motif at 35-49 is the Nuclear localization signal element; sequence KAAEWVNRPMYRKPR. Residues 63–80 fold into a zinc finger; it reads CEGPCKVQSFEQRHDILH. Positions 96-117 match the Nuclear export signal motif; the sequence is ITHRVGKRFCVKSVYILGKIWM. A Bipartite nuclear localization signal motif is present at residues 195–242; sequence RRFWKVNNHVVYNHQEAGKYENHTENALLLYMACTHASNPVYATLKIR.

This sequence belongs to the geminiviridae capsid protein family. As to quaternary structure, homomultimer. Binds to single-stranded and double-stranded viral DNA. Interacts (via nuclear localization signals) with host importin alpha-1a.

The protein resides in the virion. It is found in the host nucleus. Functionally, encapsidates the viral DNA into characteristic twinned ('geminate') particles. Binds the genomic viral ssDNA and shuttles it into and out of the cell nucleus. The CP of bipartite geminiviruses is not required for cell-to-cell or systemic movement. The protein is Capsid protein of Solanum tuberosum (Potato).